Here is a 391-residue protein sequence, read N- to C-terminus: Glycosyltransferase afumC (391 aa).

It belongs to the afumC glycosyltransferase family.

The protein operates within secondary metabolite biosynthesis. Activity is significantly decreased by addition of divalent cations such as Mg(2+), Mn(2+), Zn(2+), Ca(2+), Co(2+), Cu(2+), and Ni(2+); while Fe(2+) has little effect. In terms of biological role, glycosyltransferase; part of the gene cluster that mediates the biosynthesis fumihopaside A, a hopane-type glucoside that enhances the thermotolerance and UV resistance of N.fumigata. The first step of fumihopaside A biosynthesis is performed by the squalene hopane cyclase afumA that catalyzes the cyclization of 3S-oxidosqualene into the hopene 21-beta-H-hopane-3-beta,22-diol. The cytochrome P450 monooxygenase afumB is responsible for both hydroxylation at C-24 and oxidations at C-30 of the afumA product. The glycosyltransferase afumC then catalyzes the glycosylation at C-24, using UDP-D-glucose as a donor, to produce fumihopaside A. AfumC is also able to accept UDP-D-galactose and UDP-D-glucuronic acid as donors to yield minor derivatives. Fumihopaside B, another minor derivative produced, is different from fumihopaside A due to the presence of a double bond between C-22 and C-29. This is Glycosyltransferase afumC from Aspergillus fumigatus (strain CBS 144.89 / FGSC A1163 / CEA10) (Neosartorya fumigata).